The chain runs to 608 residues: Dolichyl-diphosphooligosaccharide--protein glycosyltransferase subunit 1 (608 aa).

The first 24 residues, 1-24 (MEAPAVCLLPLLLLLWAWAPAPGR), serve as a signal peptide directing secretion. The Lumenal portion of the chain corresponds to 25-435 (ASPEALPLVN…VVHYTFNKVL (411 aa)). The residue at position 188 (K188) is an N6-acetyllysine. N300 carries N-linked (GlcNAc...) asparagine glycosylation. A helical membrane pass occupies residues 436 to 456 (MLQEPLLVVAAFYILFFTVIV). Over 457–607 (YVRLDFSITK…VTKIDHILDA (151 aa)) the chain is Cytoplasmic. The residue at position 539 (K539) is an N6-acetyllysine; alternate. Residue K539 forms a Glycyl lysine isopeptide (Lys-Gly) (interchain with G-Cter in SUMO2); alternate linkage.

The protein belongs to the OST1 family. As to quaternary structure, component of the oligosaccharyltransferase (OST) complex. OST exists in two different complex forms which contain common core subunits RPN1, RPN2, OST48, OST4, DAD1 and TMEM258, either STT3A or STT3B as catalytic subunits, and form-specific accessory subunits. STT3A complex assembly occurs through the formation of 3 subcomplexes. Subcomplex 1 contains RPN1 and TMEM258, subcomplex 2 contains the STT3A-specific subunits STT3A, DC2/OSTC, and KCP2 as well as the core subunit OST4, and subcomplex 3 contains RPN2, DAD1, and OST48. The STT3A complex can form stable complexes with the Sec61 complex or with both the Sec61 and TRAP complexes. Interacts with TMEM35A/NACHO. In terms of processing, ubiquitinated by the ECS(ASB11) complex. Ufmylated by UFL1 in response to endoplasmic reticulum stress, promoting reticulophagy of endoplasmic reticulum sheets. Detected in liver (at protein level).

It is found in the endoplasmic reticulum membrane. It participates in protein modification; protein glycosylation. Subunit of the oligosaccharyl transferase (OST) complex that catalyzes the initial transfer of a defined glycan (Glc(3)Man(9)GlcNAc(2) in eukaryotes) from the lipid carrier dolichol-pyrophosphate to an asparagine residue within an Asn-X-Ser/Thr consensus motif in nascent polypeptide chains, the first step in protein N-glycosylation. N-glycosylation occurs cotranslationally and the complex associates with the Sec61 complex at the channel-forming translocon complex that mediates protein translocation across the endoplasmic reticulum (ER). All subunits are required for a maximal enzyme activity. The chain is Dolichyl-diphosphooligosaccharide--protein glycosyltransferase subunit 1 from Sus scrofa (Pig).